A 287-amino-acid polypeptide reads, in one-letter code: Ribosomal RNA small subunit methyltransferase A (287 aa).

The S-adenosyl-L-methionine site is built by N28, L30, G55, E77, D103, and N123.

This sequence belongs to the class I-like SAM-binding methyltransferase superfamily. rRNA adenine N(6)-methyltransferase family. RsmA subfamily.

The protein localises to the cytoplasm. The enzyme catalyses adenosine(1518)/adenosine(1519) in 16S rRNA + 4 S-adenosyl-L-methionine = N(6)-dimethyladenosine(1518)/N(6)-dimethyladenosine(1519) in 16S rRNA + 4 S-adenosyl-L-homocysteine + 4 H(+). Functionally, specifically dimethylates two adjacent adenosines (A1518 and A1519) in the loop of a conserved hairpin near the 3'-end of 16S rRNA in the 30S particle. May play a critical role in biogenesis of 30S subunits. The chain is Ribosomal RNA small subunit methyltransferase A from Rhodopseudomonas palustris (strain TIE-1).